A 276-amino-acid polypeptide reads, in one-letter code: MTNPSTINILISNDDGIFALGVRTLANTLAQAGYQVTVVCPDRERSATGHGLTLHRPIRADIVEDFFDPKITAWSCSGTPSDCVKLALSSLIENRPDFIVSGINHGSNLGTDVLYSGTVSAAMEGIIEGIPSIAMSLASFSSRQFQPGADFACGLIQQLYDHPLPDSTLLNVNIPPVTADAIAGVMLTRQGLRRYIENFEKRFDPRGKSYYWLAGELVTEIEQPDHIHLPSHIPTDVQAIQHNYITLTPLQYNLTDVASFEYLQTNQWLERSRDIK.

4 residues coordinate a divalent metal cation: Asp14, Asp15, Ser46, and Asn104.

Belongs to the SurE nucleotidase family. The cofactor is a divalent metal cation.

The protein localises to the cytoplasm. The enzyme catalyses a ribonucleoside 5'-phosphate + H2O = a ribonucleoside + phosphate. Functionally, nucleotidase that shows phosphatase activity on nucleoside 5'-monophosphates. This is 5'-nucleotidase SurE from Crocosphaera subtropica (strain ATCC 51142 / BH68) (Cyanothece sp. (strain ATCC 51142)).